The following is a 362-amino-acid chain: Solute carrier family 25 member 3 (362 aa).

The N-terminal 49 residues, 1 to 49 (MYSSVVHLARANPFNAPHLQLVHDGLAGPRSDPAGPPGPPRRSRNLAAA), are a transit peptide targeting the mitochondrion. Over 50-63 (AVEEQYSCDYGSGR) the chain is Mitochondrial intermembrane. Solcar repeat units follow at residues 63-147 (RFFI…FKVL), 160-244 (WRTS…TVEA), and 261-339 (EQLV…VKVY). Residues 64–86 (FFILCGLGGIISCGTTHTALVPL) traverse the membrane as a helical segment. Over 87-121 (DLVKCRMQVDPQKYKSIFNGFSVTLKEDGFRGLAK) the chain is Mitochondrial matrix. An N6-acetyllysine modification is found at K99. K112 carries the post-translational modification N6-methyllysine. Residues 122 to 141 (GWAPTFIGYSLQGLCKFGFY) traverse the membrane as a helical segment. The Mitochondrial intermembrane portion of the chain corresponds to 142 to 161 (EVFKVLYSNMLGEENAYLWR). A helical transmembrane segment spans residues 162-183 (TSLYLAASASAEFFADIALAPM). Over 184-218 (EAAKVRIQTQPGYANTLRDAAPKMYKEEGLKAFYK) the chain is Mitochondrial matrix. Residue Y196 is modified to Phosphotyrosine. K209 bears the N6-acetyllysine mark. A helical membrane pass occupies residues 219-238 (GVAPLWMRQIPYTMMKFACF). Residues 239–261 (ERTVEALYKFVVPKPRSECSKPE) are Mitochondrial intermembrane-facing. Residues 262–284 (QLVVTFVAGYIAGVFCAIVSHPA) traverse the membrane as a helical segment. Topologically, residues 285-314 (DSVVSVLNKEKGSSASEVLKRLGFRGVWKG) are mitochondrial matrix. A helical membrane pass occupies residues 315–333 (LFARIIMIGTLTALQWFIY). Residues 334-362 (DSVKVYFRLPRPPPPEMPESLKKKLGYTQ) lie on the Mitochondrial intermembrane side of the membrane.

This sequence belongs to the mitochondrial carrier (TC 2.A.29) family. Interacts with PPIF; the interaction is impaired by CsA. In terms of tissue distribution, expressed in heart, diaphragm and skeletal muscle (at protein level). Not detected in liver, lung, brain, and kidney (at protein level). Ubiquitous (at protein level).

The protein resides in the mitochondrion inner membrane. It catalyses the reaction phosphate(in) + H(+)(in) = phosphate(out) + H(+)(out). Its activity is regulated as follows. Up-regulated in the presence of cardiolipin. Its function is as follows. Inorganic ion transporter that transports phosphate or copper ions across the mitochondrial inner membrane into the matrix compartment. Mediates proton-coupled symport of phosphate ions necessary for mitochondrial oxidative phosphorylation of ADP to ATP. Transports copper ions probably in the form of anionic copper(I) complexes to maintain mitochondrial matrix copper pool and to supply copper for cytochrome C oxidase complex assembly. May also play a role in regulation of the mitochondrial permeability transition pore (mPTP). This is Solute carrier family 25 member 3 from Bos taurus (Bovine).